We begin with the raw amino-acid sequence, 296 residues long: 33 kDa chaperonin (296 aa).

2 cysteine pairs are disulfide-bonded: Cys-233–Cys-235 and Cys-267–Cys-270.

It belongs to the HSP33 family. Post-translationally, under oxidizing conditions two disulfide bonds are formed involving the reactive cysteines. Under reducing conditions zinc is bound to the reactive cysteines and the protein is inactive.

The protein localises to the cytoplasm. Redox regulated molecular chaperone. Protects both thermally unfolding and oxidatively damaged proteins from irreversible aggregation. Plays an important role in the bacterial defense system toward oxidative stress. The polypeptide is 33 kDa chaperonin (Actinobacillus pleuropneumoniae serotype 5b (strain L20)).